A 209-amino-acid chain; its full sequence is Pyridoxine/pyridoxamine 5'-phosphate oxidase (209 aa).

Substrate contacts are provided by residues 7-10 (RADY) and Lys-64. FMN-binding positions include 59–64 (RIVLLK), 74–75 (FT), and Lys-81. Tyr-121, Arg-125, and Ser-129 together coordinate substrate. FMN is bound by residues 138 to 139 (QS), Trp-182, and Arg-192.

It belongs to the pyridoxamine 5'-phosphate oxidase family. As to quaternary structure, homodimer. FMN is required as a cofactor.

The catalysed reaction is pyridoxamine 5'-phosphate + O2 + H2O = pyridoxal 5'-phosphate + H2O2 + NH4(+). It catalyses the reaction pyridoxine 5'-phosphate + O2 = pyridoxal 5'-phosphate + H2O2. The protein operates within cofactor metabolism; pyridoxal 5'-phosphate salvage; pyridoxal 5'-phosphate from pyridoxamine 5'-phosphate: step 1/1. It participates in cofactor metabolism; pyridoxal 5'-phosphate salvage; pyridoxal 5'-phosphate from pyridoxine 5'-phosphate: step 1/1. Its function is as follows. Catalyzes the oxidation of either pyridoxine 5'-phosphate (PNP) or pyridoxamine 5'-phosphate (PMP) into pyridoxal 5'-phosphate (PLP). This is Pyridoxine/pyridoxamine 5'-phosphate oxidase from Haemophilus ducreyi (strain 35000HP / ATCC 700724).